The primary structure comprises 166 residues: Bacterial non-heme ferritin (166 aa).

The Ferritin-like diiron domain maps to 2 to 145 (LSKELLAALN…THIDYLTRIG (144 aa)). Residues glutamate 17, glutamate 50, histidine 53, glutamate 94, and glutamine 127 each coordinate Fe cation.

It belongs to the ferritin family. Prokaryotic subfamily.

Its subcellular location is the cytoplasm. The catalysed reaction is 4 Fe(2+) + O2 + 6 H2O = 4 iron(III) oxide-hydroxide + 12 H(+). In terms of biological role, iron-storage protein. This chain is Bacterial non-heme ferritin (ftnA), found in Staphylococcus epidermidis (strain ATCC 12228 / FDA PCI 1200).